The sequence spans 768 residues: DNA replication licensing factor MCM3 homolog 2 (768 aa).

An MCM domain is found at 290–497 (TFDLLGNSLA…IDRQISEHVA (208 aa)). Residue 340-347 (GDPSVAKS) coordinates ATP. The Arginine finger motif lies at 472–475 (SRFD). The segment covering 661-670 (EMKQQADHDA) has biased composition (basic and acidic residues). The segment at 661-689 (EMKQQADHDAGATGGTVDGHGSSGNDPMD) is disordered. Residues 672–682 (ATGGTVDGHGS) are compositionally biased toward gly residues.

Belongs to the MCM family.

The protein localises to the nucleus. The enzyme catalyses ATP + H2O = ADP + phosphate + H(+). Functionally, acts as a factor that allows the DNA to undergo a single round of replication per cell cycle. Required for DNA replication and cell proliferation. May act as a component of the MCM complex which is the putative replicative helicase of the replication licensing system in eukaryotic cells. This chain is DNA replication licensing factor MCM3 homolog 2 (ROA2), found in Zea mays (Maize).